A 447-amino-acid chain; its full sequence is Enolase (447 aa).

Residue Q168 coordinates (2R)-2-phosphoglycerate. The active-site Proton donor is E210. Positions 247, 292, and 319 each coordinate Mg(2+). (2R)-2-phosphoglycerate-binding residues include K344, R373, S374, and K395. The active-site Proton acceptor is the K344.

Belongs to the enolase family. Component of the RNA degradosome, a multiprotein complex involved in RNA processing and mRNA degradation. The cofactor is Mg(2+).

It localises to the cytoplasm. It is found in the secreted. The protein localises to the cell surface. It catalyses the reaction (2R)-2-phosphoglycerate = phosphoenolpyruvate + H2O. It participates in carbohydrate degradation; glycolysis; pyruvate from D-glyceraldehyde 3-phosphate: step 4/5. Catalyzes the reversible conversion of 2-phosphoglycerate (2-PG) into phosphoenolpyruvate (PEP). It is essential for the degradation of carbohydrates via glycolysis. The polypeptide is Enolase (Blochmanniella floridana).